The following is a 394-amino-acid chain: Probable fatty acyl-CoA transferase Rv3272 (394 aa).

Asp175 (nucleophile) is an active-site residue.

It belongs to the CoA-transferase III family. In terms of assembly, homodimer.

Its function is as follows. Probably involved in fatty acid metabolism. Binds to fatty acyl-CoAs of varying carbon chain lengths, with the highest binding affinity for palmitoyl-CoA (C16:0). In vitro, alters the cell wall lipid profile and protects mycobacteria from acidic, oxidative and antibiotic stress. May play a significant role in host-pathogen interaction. This chain is Probable fatty acyl-CoA transferase Rv3272, found in Mycobacterium tuberculosis (strain ATCC 25618 / H37Rv).